We begin with the raw amino-acid sequence, 602 residues long: Zinc finger MYND domain-containing protein 11 (602 aa).

The region spanning lysine 6 to glutamine 82 is the SAMD1-like winged helix (WH) domain. The segment at aspartate 100–isoleucine 148 adopts a PHD-type zinc-finger fold. Residues lysine 149 to leucine 255 form the Bromo domain. Cysteine 258, cysteine 261, cysteine 277, and histidine 281 together coordinate Zn(2+). In terms of domain architecture, PWWP spans asparagine 280–asparagine 331. The aromatic cage required for H3.3K36me3-specific binding stretch occupies residues phenylalanine 291 to phenylalanine 310. Lysine 366 participates in a covalent cross-link: Glycyl lysine isopeptide (Lys-Gly) (interchain with G-Cter in SUMO2). Residues lysine 366 to glycine 461 form a disordered region. The short motif at arginine 394–arginine 400 is the Nuclear localization signal element. Glycyl lysine isopeptide (Lys-Gly) (interchain with G-Cter in SUMO2) cross-links involve residues lysine 407 and lysine 408. Residue serine 421 is modified to Phosphoserine. The span at serine 435–glycine 461 shows a compositional bias: polar residues. Positions 563, 566, 574, 575, 581, 585, 594, and 598 each coordinate Zn(2+). Residues cysteine 563 to cysteine 598 form an MYND-type zinc finger.

Homooligomer; forms homooligomers via its C-terminus. Interacts with histone H3.3 trimethylated at 'Lys-36' (H3.3K36me3). Interacts (via MYND-type zinc finger) with NCOR1. Interacts (via MYND-type zinc finger) with MGA protein (via PXLXP motif). Interacts (via MYND-type zinc finger) with EZH2. Interacts with EMSY and E2F6. Interacts with PIAS1 and UBE2I. Ubiquitinated, leading to proteasomal degradation. In terms of processing, sumoylated following its interaction with PIAS1 and UBE2I.

Its subcellular location is the nucleus. The protein resides in the chromosome. Chromatin reader that specifically recognizes and binds histone H3.3 trimethylated at 'Lys-36' (H3.3K36me3) and regulates RNA polymerase II elongation. Does not bind other histone H3 subtypes (H3.1 or H3.2). Colocalizes with highly expressed genes and functions as a transcription corepressor by modulating RNA polymerase II at the elongation stage. Binds non-specifically to dsDNA. Acts as a tumor-suppressor by repressing a transcriptional program essential for tumor cell growth. In Mus musculus (Mouse), this protein is Zinc finger MYND domain-containing protein 11 (Zmynd11).